The primary structure comprises 483 residues: Cobyric acid synthase (483 aa).

One can recognise a GATase cobBQ-type domain in the interval 248 to 435 (VLKVVVPVLP…LHGLFETAAA (188 aa)). Cys-329 functions as the Nucleophile in the catalytic mechanism. His-427 is an active-site residue.

Belongs to the CobB/CobQ family. CobQ subfamily.

It functions in the pathway cofactor biosynthesis; adenosylcobalamin biosynthesis. Functionally, catalyzes amidations at positions B, D, E, and G on adenosylcobyrinic A,C-diamide. NH(2) groups are provided by glutamine, and one molecule of ATP is hydrogenolyzed for each amidation. This chain is Cobyric acid synthase, found in Pseudomonas fluorescens (strain SBW25).